Here is a 259-residue protein sequence, read N- to C-terminus: Virulence plasmid ParA family protein pGP5-D (259 aa).

An ATP-binding site is contributed by 9–16; the sequence is FKGGTGKT.

It belongs to the ParA family.

This is Virulence plasmid ParA family protein pGP5-D from Chlamydia psittaci (Chlamydophila psittaci).